Reading from the N-terminus, the 160-residue chain is Sec-independent protein translocase protein TatB (160 aa).

Residues 1-21 (MFGMGFFEILVVLIVAIIFLG) form a helical membrane-spanning segment. The segment at 118-160 (HLNEEVSNEEALNKEVSSDESPKEVQLTTDNNAKEHDKEKEHV) is disordered. Basic and acidic residues-rich tracts occupy residues 128-140 (ALNK…ESPK) and 149-160 (NAKEHDKEKEHV).

The protein belongs to the TatB family. In terms of assembly, the Tat system comprises two distinct complexes: a TatABC complex, containing multiple copies of TatA, TatB and TatC subunits, and a separate TatA complex, containing only TatA subunits. Substrates initially bind to the TatABC complex, which probably triggers association of the separate TatA complex to form the active translocon.

Its subcellular location is the cell inner membrane. In terms of biological role, part of the twin-arginine translocation (Tat) system that transports large folded proteins containing a characteristic twin-arginine motif in their signal peptide across membranes. Together with TatC, TatB is part of a receptor directly interacting with Tat signal peptides. TatB may form an oligomeric binding site that transiently accommodates folded Tat precursor proteins before their translocation. This Helicobacter pylori (strain J99 / ATCC 700824) (Campylobacter pylori J99) protein is Sec-independent protein translocase protein TatB.